A 193-amino-acid polypeptide reads, in one-letter code: Acyl carrier protein phosphodiesterase (193 aa).

This sequence belongs to the AcpH family.

It catalyses the reaction holo-[ACP] + H2O = apo-[ACP] + (R)-4'-phosphopantetheine + H(+). In terms of biological role, converts holo-ACP to apo-ACP by hydrolytic cleavage of the phosphopantetheine prosthetic group from ACP. The protein is Acyl carrier protein phosphodiesterase of Yersinia enterocolitica serotype O:8 / biotype 1B (strain NCTC 13174 / 8081).